A 275-amino-acid chain; its full sequence is 3-methyl-2-oxobutanoate hydroxymethyltransferase (275 aa).

Residues D55 and D94 each coordinate Mg(2+). 3-methyl-2-oxobutanoate-binding positions include 55–56 (DS), D94, and K122. Residue E124 participates in Mg(2+) binding. E191 (proton acceptor) is an active-site residue.

This sequence belongs to the PanB family. Homodecamer; pentamer of dimers. It depends on Mg(2+) as a cofactor.

It localises to the cytoplasm. It carries out the reaction 3-methyl-2-oxobutanoate + (6R)-5,10-methylene-5,6,7,8-tetrahydrofolate + H2O = 2-dehydropantoate + (6S)-5,6,7,8-tetrahydrofolate. It functions in the pathway cofactor biosynthesis; (R)-pantothenate biosynthesis; (R)-pantoate from 3-methyl-2-oxobutanoate: step 1/2. In terms of biological role, catalyzes the reversible reaction in which hydroxymethyl group from 5,10-methylenetetrahydrofolate is transferred onto alpha-ketoisovalerate to form ketopantoate. The chain is 3-methyl-2-oxobutanoate hydroxymethyltransferase from Marinomonas sp. (strain MWYL1).